The chain runs to 65 residues: UPF0434 protein bsr0601 (65 aa).

It belongs to the UPF0434 family.

This is UPF0434 protein bsr0601 from Bradyrhizobium diazoefficiens (strain JCM 10833 / BCRC 13528 / IAM 13628 / NBRC 14792 / USDA 110).